A 432-amino-acid polypeptide reads, in one-letter code: Asparagine--tRNA ligase (432 aa).

It belongs to the class-II aminoacyl-tRNA synthetase family. In terms of assembly, homodimer.

The protein resides in the cytoplasm. It catalyses the reaction tRNA(Asn) + L-asparagine + ATP = L-asparaginyl-tRNA(Asn) + AMP + diphosphate + H(+). This is Asparagine--tRNA ligase from Lactobacillus johnsonii (strain CNCM I-12250 / La1 / NCC 533).